The following is a 622-amino-acid chain: Threonine--tRNA ligase (622 aa).

The interval M1–K134 is editing domain. Residues P199–P498 form a catalytic region. Zn(2+) is bound by residues C291, H343, and H467.

The protein belongs to the class-II aminoacyl-tRNA synthetase family. As to quaternary structure, homodimer. Zn(2+) serves as cofactor.

It is found in the cytoplasm. It carries out the reaction tRNA(Thr) + L-threonine + ATP = L-threonyl-tRNA(Thr) + AMP + diphosphate + H(+). Its function is as follows. Catalyzes the attachment of threonine to tRNA(Thr) in a two-step reaction: L-threonine is first activated by ATP to form Thr-AMP and then transferred to the acceptor end of tRNA(Thr). Also edits incorrectly charged L-seryl-tRNA(Thr). The polypeptide is Threonine--tRNA ligase (Methanococcus vannielii (strain ATCC 35089 / DSM 1224 / JCM 13029 / OCM 148 / SB)).